Consider the following 366-residue polypeptide: Chorismate synthase (366 aa).

Positions 48 and 54 each coordinate NADP(+). Residues 125–127, 238–239, Gly-278, 293–297, and Arg-319 contribute to the FMN site; these read RSS, NA, and KPTSS.

It belongs to the chorismate synthase family. Homotetramer. It depends on FMNH2 as a cofactor.

It carries out the reaction 5-O-(1-carboxyvinyl)-3-phosphoshikimate = chorismate + phosphate. It functions in the pathway metabolic intermediate biosynthesis; chorismate biosynthesis; chorismate from D-erythrose 4-phosphate and phosphoenolpyruvate: step 7/7. Catalyzes the anti-1,4-elimination of the C-3 phosphate and the C-6 proR hydrogen from 5-enolpyruvylshikimate-3-phosphate (EPSP) to yield chorismate, which is the branch point compound that serves as the starting substrate for the three terminal pathways of aromatic amino acid biosynthesis. This reaction introduces a second double bond into the aromatic ring system. The polypeptide is Chorismate synthase (Burkholderia ambifaria (strain ATCC BAA-244 / DSM 16087 / CCUG 44356 / LMG 19182 / AMMD) (Burkholderia cepacia (strain AMMD))).